Here is a 391-residue protein sequence, read N- to C-terminus: Probable inactive allantoicase (391 aa).

The protein belongs to the allantoicase family.

In terms of biological role, the function of this enzyme is unclear as allantoicase activity is not known to exist in mammals. This is Probable inactive allantoicase from Homo sapiens (Human).